Consider the following 306-residue polypeptide: Acetyl-coenzyme A carboxylase carboxyl transferase subunit beta (306 aa).

The region spanning 25–294 (VWTKCDSCGQ…PSPDAPREAV (270 aa)) is the CoA carboxyltransferase N-terminal domain. Residues Cys29, Cys32, Cys48, and Cys51 each contribute to the Zn(2+) site. The C4-type zinc-finger motif lies at 29–51 (CDSCGQVLYRAELERNLEVCPKC). The disordered stretch occupies residues 286-306 (SPDAPREAVVVPPVPDQDHEA).

Belongs to the AccD/PCCB family. As to quaternary structure, acetyl-CoA carboxylase is a heterohexamer composed of biotin carboxyl carrier protein (AccB), biotin carboxylase (AccC) and two subunits each of ACCase subunit alpha (AccA) and ACCase subunit beta (AccD). Requires Zn(2+) as cofactor.

It localises to the cytoplasm. It carries out the reaction N(6)-carboxybiotinyl-L-lysyl-[protein] + acetyl-CoA = N(6)-biotinyl-L-lysyl-[protein] + malonyl-CoA. Its pathway is lipid metabolism; malonyl-CoA biosynthesis; malonyl-CoA from acetyl-CoA: step 1/1. In terms of biological role, component of the acetyl coenzyme A carboxylase (ACC) complex. Biotin carboxylase (BC) catalyzes the carboxylation of biotin on its carrier protein (BCCP) and then the CO(2) group is transferred by the transcarboxylase to acetyl-CoA to form malonyl-CoA. The polypeptide is Acetyl-coenzyme A carboxylase carboxyl transferase subunit beta (Cronobacter sakazakii (strain ATCC BAA-894) (Enterobacter sakazakii)).